Reading from the N-terminus, the 213-residue chain is High frequency lysogenization protein HflD homolog (213 aa).

A coiled-coil region spans residues 79–122 (QGLNAELTRYTLSLMVLERKLSSAKGALNTLGDRINGLQRQLDH).

The protein belongs to the HflD family.

Its subcellular location is the cytoplasm. The protein resides in the cell inner membrane. This chain is High frequency lysogenization protein HflD homolog, found in Salmonella agona (strain SL483).